A 407-amino-acid polypeptide reads, in one-letter code: Prolyl hydroxylase EGLN2 (407 aa).

2 stretches are compositionally biased toward low complexity: residues 1–24 and 57–75; these read MDSPCQPQPLSQALPQLPGSSSEP and ASAGSGTPRATATSTTASP. Disordered stretches follow at residues 1–34, 50–89, and 108–157; these read MDSPCQPQPLSQALPQLPGSSSEPLEPEPGRARM, CPGVPSEASAGSGTPRATATSTTASPLRDGFGGQDGGELR, and AAQG…CSSG. Residues 89–134 carry the Bipartite nuclear localization signal motif; that stretch reads RPLQSEGAAALVTKGCQRLAAQGARPEAPKRKWAEDGGDAPSPSKR. S130 carries the phosphoserine modification. The interval 225–235 is beta(2)beta(3) 'finger-like' loop; sequence VSQRAIPPRSI. The Fe2OG dioxygenase domain occupies 278–376; it reads GRTKAMVACY…RYAITVWYFD (99 aa). 3 residues coordinate Fe cation: H297, D299, and H358. A 2-oxoglutarate-binding site is contributed by R367.

Interacts (preferably isoform p40) with SIAH2; the interaction targets both SIAH2 isoforms for proteasomal degradation in vitro. Interacts with LIMD1, WTIP and AJUBA. It depends on Fe(2+) as a cofactor. Requires L-ascorbate as cofactor. In terms of processing, ubiquitinated by SIAH1 and/or SIAH2 in response to the unfolded protein response (UPR), leading to its degradation. As to expression, expressed in adult and fetal heart, brain, liver, lung, skeletal muscle, and kidney. Also expressed in testis and placenta. Highest levels in adult brain, placenta, lung, kidney, and testis. Expressed in hormone responsive tissues, including normal and cancerous mammary, ovarian and prostate epithelium.

The protein localises to the nucleus. It catalyses the reaction L-prolyl-[protein] + 2-oxoglutarate + O2 = trans-4-hydroxy-L-prolyl-[protein] + succinate + CO2. The catalysed reaction is L-prolyl-[hypoxia-inducible factor alpha subunit] + 2-oxoglutarate + O2 = trans-4-hydroxy-L-prolyl-[hypoxia-inducible factor alpha subunit] + succinate + CO2. Prolyl hydroxylase that mediates hydroxylation of proline residues in target proteins, such as ATF4, IKBKB, CEP192 and HIF1A. Target proteins are preferentially recognized via a LXXLAP motif. Cellular oxygen sensor that catalyzes, under normoxic conditions, the post-translational formation of 4-hydroxyproline in hypoxia-inducible factor (HIF) alpha proteins. Hydroxylates a specific proline found in each of the oxygen-dependent degradation (ODD) domains (N-terminal, NODD, and C-terminal, CODD) of HIF1A. Also hydroxylates HIF2A. Has a preference for the CODD site for both HIF1A and HIF2A. Hydroxylated HIFs are then targeted for proteasomal degradation via the von Hippel-Lindau ubiquitination complex. Under hypoxic conditions, the hydroxylation reaction is attenuated allowing HIFs to escape degradation resulting in their translocation to the nucleus, heterodimerization with HIF1B, and increased expression of hypoxy-inducible genes. EGLN2 is involved in regulating hypoxia tolerance and apoptosis in cardiac and skeletal muscle. Also regulates susceptibility to normoxic oxidative neuronal death. Links oxygen sensing to cell cycle and primary cilia formation by hydroxylating the critical centrosome component CEP192 which promotes its ubiquitination and subsequent proteasomal degradation. Hydroxylates IKBKB, mediating NF-kappa-B activation in hypoxic conditions. Also mediates hydroxylation of ATF4, leading to decreased protein stability of ATF4. This is Prolyl hydroxylase EGLN2 from Homo sapiens (Human).